The following is a 467-amino-acid chain: Xanthan biosynthesis protein XanB (467 aa).

It belongs to the mannose-6-phosphate isomerase type 2 family.

The catalysed reaction is D-mannose 6-phosphate = D-fructose 6-phosphate. It carries out the reaction alpha-D-mannose 1-phosphate + GTP + H(+) = GDP-alpha-D-mannose + diphosphate. It functions in the pathway nucleotide-sugar biosynthesis; GDP-alpha-D-mannose biosynthesis; GDP-alpha-D-mannose from alpha-D-mannose 1-phosphate (GTP route): step 1/1. The protein operates within nucleotide-sugar biosynthesis; GDP-alpha-D-mannose biosynthesis; alpha-D-mannose 1-phosphate from D-fructose 6-phosphate: step 1/2. In terms of biological role, involved in xanthan production. The chain is Xanthan biosynthesis protein XanB (xanB) from Xanthomonas campestris pv. campestris (strain ATCC 33913 / DSM 3586 / NCPPB 528 / LMG 568 / P 25).